We begin with the raw amino-acid sequence, 98 residues long: MSAGVRSEPMKVVFINTQYVQTDARSFKTIVQELTGKNAVVADGPYEFSGQGYGGKDSSQRFCGVGKEAERGVETTEFDSFFREMPPVGELYNLWSDH.

The VQ motif lies at 27-36 (FKTIVQELTG).

Interacts with WRKY33.

Its subcellular location is the nucleus. May modulate WRKY transcription factor activities. The sequence is that of VQ motif-containing protein 1 from Arabidopsis thaliana (Mouse-ear cress).